A 468-amino-acid polypeptide reads, in one-letter code: Glutamate--tRNA ligase (468 aa).

The short motif at 8-18 (PSPTGDPHVGT) is the 'HIGH' region element. The short motif at 243-247 (KISKR) is the 'KMSKS' region element. Lysine 246 lines the ATP pocket.

Belongs to the class-I aminoacyl-tRNA synthetase family. Glutamate--tRNA ligase type 1 subfamily. Monomer.

Its subcellular location is the cytoplasm. The catalysed reaction is tRNA(Glu) + L-glutamate + ATP = L-glutamyl-tRNA(Glu) + AMP + diphosphate. Catalyzes the attachment of glutamate to tRNA(Glu) in a two-step reaction: glutamate is first activated by ATP to form Glu-AMP and then transferred to the acceptor end of tRNA(Glu). This Thermus thermophilus (strain ATCC BAA-163 / DSM 7039 / HB27) protein is Glutamate--tRNA ligase.